The chain runs to 140 residues: MVKMDRGRKVPEEQIIYADILYYGGLIGIIFMAITFAIYVSGTLPSLVKPEELTELWTHDTHYYLEETGLPTGWGWINYVTYGDVLNFVALAFLAMITIICYLAIIPVLLKKKDIIYTILAIAEVIILLLAASGLLQAGH.

3 helical membrane-spanning segments follow: residues 20–42 (ILYY…YVSG), 88–110 (FVAL…PVLL), and 115–137 (IIYT…GLLQ).

It localises to the cell membrane. This is an uncharacterized protein from Archaeoglobus fulgidus (strain ATCC 49558 / DSM 4304 / JCM 9628 / NBRC 100126 / VC-16).